The primary structure comprises 830 residues: Prolactin receptor (830 aa).

Residues 1–23 form the signal peptide; it reads MKQKLRSSVQIILLFALTAVGLT. Residues 24–439 are Extracellular-facing; that stretch reads GQSYPGKPKI…QIPTDFRIKD (416 aa). Fibronectin type-III domains lie at 30-128, 129-228, 231-331, and 333-434; these read KPKI…VQPD, APVN…IPNG, PPEK…IVQT, and PPVN…IPTD. C36 and C46 are oxidised to a cystine. N59 carries an N-linked (GlcNAc...) asparagine glycan. C75 and C86 are disulfide-bonded. N91, N100, N112, N132, N263, N304, N316, and N336 each carry an N-linked (GlcNAc...) asparagine glycan. Residues D415 and H417 each contribute to the Zn(2+) site. Residues 420 to 424 carry the WSXWS motif motif; it reads WSEWS. Residues 440–460 form a helical membrane-spanning segment; that stretch reads MVVWIIVGVLSSLICLVMSWT. At 461–830 the chain is on the cytoplasmic side; that stretch reads MVLKGYRMIA…DPSSFIPAFK (370 aa). Positions 472–480 match the Box 1 motif motif; it reads ILPPVPGPK.

Belongs to the type I cytokine receptor family. Type 1 subfamily.

It is found in the membrane. Its function is as follows. This is a receptor for the anterior pituitary hormone prolactin. The sequence is that of Prolactin receptor (PRLR) from Columba livia (Rock dove).